A 70-amino-acid chain; its full sequence is MAIGVNQLLIILVIIVLLFGAKKIPELAKGLGKGIKSFKAEMEDDKPIEKVEKKGDDVVDAKVEETTKNA.

Residues 1–21 form a helical membrane-spanning segment; it reads MAIGVNQLLIILVIIVLLFGA.

This sequence belongs to the TatA/E family. As to quaternary structure, the Tat system comprises two distinct complexes: a TatABC complex, containing multiple copies of TatA, TatB and TatC subunits, and a separate TatA complex, containing only TatA subunits. Substrates initially bind to the TatABC complex, which probably triggers association of the separate TatA complex to form the active translocon.

The protein localises to the cell inner membrane. Its function is as follows. Part of the twin-arginine translocation (Tat) system that transports large folded proteins containing a characteristic twin-arginine motif in their signal peptide across membranes. TatA could form the protein-conducting channel of the Tat system. The chain is Sec-independent protein translocase protein TatA from Campylobacter curvus (strain 525.92).